Reading from the N-terminus, the 118-residue chain is Small ribosomal subunit protein eS10 (118 aa).

The disordered stretch occupies residues 91–118 (RLKNAPAERPRPSRGGPRRGGYRGRARD). Positions 106–118 (GPRRGGYRGRARD) are enriched in basic residues.

It belongs to the eukaryotic ribosomal protein eS10 family. As to quaternary structure, component of the small ribosomal subunit. Mature ribosomes consist of a small (40S) and a large (60S) subunit. The 40S subunit contains about 32 different proteins and 1 molecule of RNA (18S). The 60S subunit contains 45 different proteins and 3 molecules of RNA (25S, 5.8S and 5S).

Its subcellular location is the cytoplasm. Component of the ribosome, a large ribonucleoprotein complex responsible for the synthesis of proteins in the cell. The small ribosomal subunit (SSU) binds messenger RNAs (mRNAs) and translates the encoded message by selecting cognate aminoacyl-transfer RNA (tRNA) molecules. The large subunit (LSU) contains the ribosomal catalytic site termed the peptidyl transferase center (PTC), which catalyzes the formation of peptide bonds, thereby polymerizing the amino acids delivered by tRNAs into a polypeptide chain. The nascent polypeptides leave the ribosome through a tunnel in the LSU and interact with protein factors that function in enzymatic processing, targeting, and the membrane insertion of nascent chains at the exit of the ribosomal tunnel. The polypeptide is Small ribosomal subunit protein eS10 (RPS10) (Candida albicans (strain SC5314 / ATCC MYA-2876) (Yeast)).